We begin with the raw amino-acid sequence, 381 residues long: Glycerol-3-phosphate dehydrogenase [NAD(+)] (381 aa).

The interval 1–27 (MTAMDRLDHVSNQLAAKRQKKNPEGKP) is disordered. NAD(+) contacts are provided by residues 34–39 (GSGNWG), Phe66, and Phe122. Lys145 contributes to the substrate binding site. An NAD(+)-binding site is contributed by Ala178. Lys238 functions as the Proton acceptor in the catalytic mechanism. Arg303 and Gln332 together coordinate NAD(+). 303 to 304 (RN) contributes to the substrate binding site.

This sequence belongs to the NAD-dependent glycerol-3-phosphate dehydrogenase family.

It carries out the reaction sn-glycerol 3-phosphate + NAD(+) = dihydroxyacetone phosphate + NADH + H(+). The polypeptide is Glycerol-3-phosphate dehydrogenase [NAD(+)] (GPD) (Pichia angusta (Yeast)).